Here is a 445-residue protein sequence, read N- to C-terminus: MKLNKLFDSKTVVFKKSDKYGKSDCCKTKCVEGQIEFGVKIPTDFPAFNRALVTFLKTQKNQLNVDLDSFVELYKAENLCYKTALKVVVASITFCETTPFTMKTEPQKNVEVAVKCDSEHTSLIKEYEVVGNYVNMARQLQDTPSDQLYPEEFVKRFEKAATGLGVKITVLKQADLIKKKMGLLLGVNKGSEREARLLVISYNNNKKSSETLALVGKGITYDSGGMNIKTGDYMRGMKYDMSGAAIVCSTVLALAKNKVKTNVVAVAALTENLPGPHAQRPDDIQTAYNGKTVEIDNTDAEGRLVLADAISYAAKDLKATQIIDVATLTGLMSYILSTTYTGIFSTCDMAWDAFKKAACCAGEPVWRLPMHPDYLKPLESKLADLQNSTSVKGAGSSRAACFLAEFREGVPLIHCDIASTASIQDLGQGVLVRTLYERAAQQAKE.

2 residues coordinate Mn(2+): Lys217 and Asp222. Lys229 is an active-site residue. The Mn(2+) site is built by Asp240, Asp299, and Glu301. The active site involves Arg303.

This sequence belongs to the peptidase M17 family. Requires Mn(2+) as cofactor.

It is found in the cytoplasm. The enzyme catalyses Release of an N-terminal amino acid, Xaa-|-Yaa-, in which Xaa is preferably Leu, but may be other amino acids including Pro although not Arg or Lys, and Yaa may be Pro. Amino acid amides and methyl esters are also readily hydrolyzed, but rates on arylamides are exceedingly low.. The catalysed reaction is Release of an N-terminal amino acid, preferentially leucine, but not glutamic or aspartic acids.. Functionally, presumably involved in the processing and regular turnover of intracellular proteins. Catalyzes the removal of unsubstituted N-terminal amino acids from various peptides. This is Probable cytosol aminopeptidase (pepA) from Mycoplasma pneumoniae (strain ATCC 29342 / M129 / Subtype 1) (Mycoplasmoides pneumoniae).